Reading from the N-terminus, the 138-residue chain is Basic phospholipase A2 myotoxin I (138 aa).

An N-terminal signal peptide occupies residues 1–16 (MRTLWIMAVLLVGVEG). 7 cysteine pairs are disulfide-bonded: Cys42–Cys131, Cys44–Cys60, Cys59–Cys111, Cys65–Cys138, Cys66–Cys104, Cys73–Cys97, and Cys91–Cys102. Positions 43, 45, and 47 each coordinate Ca(2+). Residue His63 is part of the active site. Asp64 serves as a coordination point for Ca(2+). Asp105 is a catalytic residue.

It belongs to the phospholipase A2 family. Group II subfamily. D49 sub-subfamily. Monomer. Homodimer; non-covalently linked (alternative/compact dimer conformation). Requires Ca(2+) as cofactor. In terms of tissue distribution, expressed by the venom gland.

The protein resides in the secreted. It catalyses the reaction a 1,2-diacyl-sn-glycero-3-phosphocholine + H2O = a 1-acyl-sn-glycero-3-phosphocholine + a fatty acid + H(+). Its activity is regulated as follows. High level of membrane cholesterol content reduces cytolytic activity, whereas low level of membrane cholesterol content increases cytolytic activity. Its function is as follows. Snake venom phospholipase A2 (PLA2) that displays local myotoxic activity. It also displays anticoagulant action in plasma and edema-inducing activities. In addition, it shows cytotoxic activity to a variety of cell types and bactericidal activity to a variety of Gram-negative and Gram-positive bacteria. PLA2 catalyzes the calcium-dependent hydrolysis of the 2-acyl groups in 3-sn-phosphoglycerides. The chain is Basic phospholipase A2 myotoxin I from Bothrops asper (Terciopelo).